The sequence spans 80 residues: WAP four-disulfide core domain protein 15A (80 aa).

The signal sequence occupies residues 1 to 20 (MKPSSLLLFTTTILLCLSMA). In terms of domain architecture, WAP spans 29–76 (VTPKQGYCPEFLLDCPFVLLPVCSRDKGCKGTKKCCFYYCQMRCVEPW). Cystine bridges form between C36–C64, C43–C68, C51–C63, and C57–C72.

It is found in the secreted. Antibacterial protein. The polypeptide is WAP four-disulfide core domain protein 15A (Mus musculus (Mouse)).